The following is a 402-amino-acid chain: Argininosuccinate synthase (402 aa).

ATP is bound by residues 10-18 and A38; that span reads AYSGGVDTS. L-citrulline is bound at residue Y89. G119 is a binding site for ATP. L-aspartate is bound by residues T121, N125, and D126. Residue N125 coordinates L-citrulline. The L-citrulline site is built by R129, S177, S186, E262, and Y274.

The protein belongs to the argininosuccinate synthase family. Type 1 subfamily. As to quaternary structure, homotetramer.

It localises to the cytoplasm. The catalysed reaction is L-citrulline + L-aspartate + ATP = 2-(N(omega)-L-arginino)succinate + AMP + diphosphate + H(+). The protein operates within amino-acid biosynthesis; L-arginine biosynthesis; L-arginine from L-ornithine and carbamoyl phosphate: step 2/3. The protein is Argininosuccinate synthase of Prochlorococcus marinus (strain SARG / CCMP1375 / SS120).